The primary structure comprises 466 residues: Glutamate decarboxylase (466 aa).

Lys277 carries the N6-(pyridoxal phosphate)lysine modification.

Belongs to the group II decarboxylase family. Pyridoxal 5'-phosphate serves as cofactor.

It carries out the reaction L-glutamate + H(+) = 4-aminobutanoate + CO2. Functionally, converts internalized glutamate to GABA and increases the internal pH. Involved in glutamate-dependent acid resistance. The protein is Glutamate decarboxylase (gadB) of Lactococcus lactis subsp. lactis (strain IL1403) (Streptococcus lactis).